The primary structure comprises 321 residues: Acetyl-coenzyme A carboxylase carboxyl transferase subunit alpha (321 aa).

The CoA carboxyltransferase C-terminal domain occupies 39–293 (KLEEKSRKLT…KTELKRNLEE (255 aa)).

The protein belongs to the AccA family. Acetyl-CoA carboxylase is a heterohexamer composed of biotin carboxyl carrier protein (AccB), biotin carboxylase (AccC) and two subunits each of ACCase subunit alpha (AccA) and ACCase subunit beta (AccD).

The protein localises to the cytoplasm. The catalysed reaction is N(6)-carboxybiotinyl-L-lysyl-[protein] + acetyl-CoA = N(6)-biotinyl-L-lysyl-[protein] + malonyl-CoA. Its pathway is lipid metabolism; malonyl-CoA biosynthesis; malonyl-CoA from acetyl-CoA: step 1/1. In terms of biological role, component of the acetyl coenzyme A carboxylase (ACC) complex. First, biotin carboxylase catalyzes the carboxylation of biotin on its carrier protein (BCCP) and then the CO(2) group is transferred by the carboxyltransferase to acetyl-CoA to form malonyl-CoA. The polypeptide is Acetyl-coenzyme A carboxylase carboxyl transferase subunit alpha (Methylococcus capsulatus (strain ATCC 33009 / NCIMB 11132 / Bath)).